We begin with the raw amino-acid sequence, 245 residues long: 1-(5-phosphoribosyl)-5-[(5-phosphoribosylamino)methylideneamino] imidazole-4-carboxamide isomerase (245 aa).

Aspartate 7 functions as the Proton acceptor in the catalytic mechanism. Residue aspartate 129 is the Proton donor of the active site.

It belongs to the HisA/HisF family.

Its subcellular location is the cytoplasm. The enzyme catalyses 1-(5-phospho-beta-D-ribosyl)-5-[(5-phospho-beta-D-ribosylamino)methylideneamino]imidazole-4-carboxamide = 5-[(5-phospho-1-deoxy-D-ribulos-1-ylimino)methylamino]-1-(5-phospho-beta-D-ribosyl)imidazole-4-carboxamide. It participates in amino-acid biosynthesis; L-histidine biosynthesis; L-histidine from 5-phospho-alpha-D-ribose 1-diphosphate: step 4/9. This Salmonella dublin (strain CT_02021853) protein is 1-(5-phosphoribosyl)-5-[(5-phosphoribosylamino)methylideneamino] imidazole-4-carboxamide isomerase.